We begin with the raw amino-acid sequence, 75 residues long: Large ribosomal subunit protein uL30 (75 aa).

The protein belongs to the universal ribosomal protein uL30 family. In terms of assembly, part of the 50S ribosomal subunit.

This chain is Large ribosomal subunit protein uL30, found in Roseiflexus castenholzii (strain DSM 13941 / HLO8).